The following is a 273-amino-acid chain: 2,3,4,5-tetrahydropyridine-2,6-dicarboxylate N-succinyltransferase (273 aa).

Substrate contacts are provided by arginine 106 and aspartate 143.

This sequence belongs to the transferase hexapeptide repeat family. As to quaternary structure, homotrimer.

It is found in the cytoplasm. The catalysed reaction is (S)-2,3,4,5-tetrahydrodipicolinate + succinyl-CoA + H2O = (S)-2-succinylamino-6-oxoheptanedioate + CoA. It participates in amino-acid biosynthesis; L-lysine biosynthesis via DAP pathway; LL-2,6-diaminopimelate from (S)-tetrahydrodipicolinate (succinylase route): step 1/3. The chain is 2,3,4,5-tetrahydropyridine-2,6-dicarboxylate N-succinyltransferase from Wolbachia pipientis wMel.